A 551-amino-acid polypeptide reads, in one-letter code: Membrane protein insertase YidC (551 aa).

A helical transmembrane segment spans residues 3 to 23 (ANHIRILLLVTIAIMFISLMG). Over residues 33–47 (NTKQQTSATQNNSHY) the composition is skewed to polar residues. A disordered region spans residues 33–58 (NTKQQTSATQNNSHYDNADSSTNTDV). A run of 3 helical transmembrane segments spans residues 361–381 (LVGNWGLAIILVTCLIKLIFY), 431–451 (LSGCLPMLIQIPIFISLYWVL), and 504–524 (VMMFLPVIFTFLFASFPSGLV).

This sequence belongs to the OXA1/ALB3/YidC family. Type 1 subfamily. As to quaternary structure, interacts with the Sec translocase complex via SecD. Specifically interacts with transmembrane segments of nascent integral membrane proteins during membrane integration.

It is found in the cell inner membrane. Required for the insertion and/or proper folding and/or complex formation of integral membrane proteins into the membrane. Involved in integration of membrane proteins that insert both dependently and independently of the Sec translocase complex, as well as at least some lipoproteins. Aids folding of multispanning membrane proteins. The chain is Membrane protein insertase YidC from Francisella tularensis subsp. novicida (strain U112).